Here is a 30-residue protein sequence, read N- to C-terminus: DCPSDWSPYEGHCYKHFIKWMNNEDAERFC.

The region spanning 1-30 is the C-type lectin domain; sequence DCPSDWSPYEGHCYKHFIKWMNNEDAERFC. The cysteines at positions 2 and 13 are disulfide-linked.

It belongs to the snaclec family. Heterodimer of subunits A and B; disulfide-linked. As to expression, expressed by the venom gland.

It localises to the secreted. Functionally, anticoagulant protein which binds to the gamma-carboxyglutamic acid-domain regions of factors IX (F9) and factor X (F10) in the presence of calcium with a 1 to 1 stoichiometry. This chain is Snaclec coagulation factor IX/factor X-binding protein subunit A, found in Bothrops jararaca (Jararaca).